A 431-amino-acid chain; its full sequence is Histidinol dehydrogenase (431 aa).

The NAD(+) site is built by tyrosine 127, glutamine 189, and asparagine 212. Substrate-binding residues include serine 237, glutamine 259, and histidine 262. 2 residues coordinate Zn(2+): glutamine 259 and histidine 262. Active-site proton acceptor residues include glutamate 326 and histidine 327. Substrate is bound by residues histidine 327, aspartate 360, glutamate 414, and histidine 419. Aspartate 360 is a binding site for Zn(2+). Zn(2+) is bound at residue histidine 419.

Belongs to the histidinol dehydrogenase family. Zn(2+) serves as cofactor.

The catalysed reaction is L-histidinol + 2 NAD(+) + H2O = L-histidine + 2 NADH + 3 H(+). Its pathway is amino-acid biosynthesis; L-histidine biosynthesis; L-histidine from 5-phospho-alpha-D-ribose 1-diphosphate: step 9/9. In terms of biological role, catalyzes the sequential NAD-dependent oxidations of L-histidinol to L-histidinaldehyde and then to L-histidine. The chain is Histidinol dehydrogenase from Xanthomonas euvesicatoria pv. vesicatoria (strain 85-10) (Xanthomonas campestris pv. vesicatoria).